A 228-amino-acid polypeptide reads, in one-letter code: 7-cyano-7-deazaguanine synthase (228 aa).

16–26 lines the ATP pocket; that stretch reads FSGGQDSTTCL. The Zn(2+) site is built by cysteine 195, cysteine 203, cysteine 206, and cysteine 209.

It belongs to the QueC family. Zn(2+) serves as cofactor.

The catalysed reaction is 7-carboxy-7-deazaguanine + NH4(+) + ATP = 7-cyano-7-deazaguanine + ADP + phosphate + H2O + H(+). It functions in the pathway purine metabolism; 7-cyano-7-deazaguanine biosynthesis. In terms of biological role, catalyzes the ATP-dependent conversion of 7-carboxy-7-deazaguanine (CDG) to 7-cyano-7-deazaguanine (preQ(0)). The protein is 7-cyano-7-deazaguanine synthase of Haemophilus influenzae (strain ATCC 51907 / DSM 11121 / KW20 / Rd).